A 420-amino-acid polypeptide reads, in one-letter code: Tryptophan--tRNA ligase (420 aa).

The 'HIGH' region motif lies at 72–80; that stretch reads PSGLPHFGH. The short motif at 308-312 is the 'KMSKS' region element; the sequence is KMSSS.

The protein belongs to the class-I aminoacyl-tRNA synthetase family.

It localises to the cytoplasm. It carries out the reaction tRNA(Trp) + L-tryptophan + ATP = L-tryptophyl-tRNA(Trp) + AMP + diphosphate + H(+). In Archaeoglobus fulgidus (strain ATCC 49558 / DSM 4304 / JCM 9628 / NBRC 100126 / VC-16), this protein is Tryptophan--tRNA ligase.